The chain runs to 197 residues: dTTP/UTP pyrophosphatase (197 aa).

D70 functions as the Proton acceptor in the catalytic mechanism.

The protein belongs to the Maf family. YhdE subfamily. It depends on a divalent metal cation as a cofactor.

The protein localises to the cytoplasm. The enzyme catalyses dTTP + H2O = dTMP + diphosphate + H(+). It carries out the reaction UTP + H2O = UMP + diphosphate + H(+). Functionally, nucleoside triphosphate pyrophosphatase that hydrolyzes dTTP and UTP. May have a dual role in cell division arrest and in preventing the incorporation of modified nucleotides into cellular nucleic acids. The chain is dTTP/UTP pyrophosphatase (yceF2) from Escherichia coli O6:K15:H31 (strain 536 / UPEC).